A 456-amino-acid polypeptide reads, in one-letter code: Argininosuccinate lyase (456 aa).

The protein belongs to the lyase 1 family. Argininosuccinate lyase subfamily.

The protein resides in the cytoplasm. It catalyses the reaction 2-(N(omega)-L-arginino)succinate = fumarate + L-arginine. Its pathway is amino-acid biosynthesis; L-arginine biosynthesis; L-arginine from L-ornithine and carbamoyl phosphate: step 3/3. This chain is Argininosuccinate lyase, found in Listeria monocytogenes serovar 1/2a (strain ATCC BAA-679 / EGD-e).